Here is a 263-residue protein sequence, read N- to C-terminus: Acyl-[acyl-carrier-protein]--UDP-N-acetylglucosamine O-acyltransferase (263 aa).

It belongs to the transferase hexapeptide repeat family. LpxA subfamily. As to quaternary structure, homotrimer.

It is found in the cytoplasm. It catalyses the reaction a (3R)-hydroxyacyl-[ACP] + UDP-N-acetyl-alpha-D-glucosamine = a UDP-3-O-[(3R)-3-hydroxyacyl]-N-acetyl-alpha-D-glucosamine + holo-[ACP]. Its pathway is glycolipid biosynthesis; lipid IV(A) biosynthesis; lipid IV(A) from (3R)-3-hydroxytetradecanoyl-[acyl-carrier-protein] and UDP-N-acetyl-alpha-D-glucosamine: step 1/6. Its function is as follows. Involved in the biosynthesis of lipid A, a phosphorylated glycolipid that anchors the lipopolysaccharide to the outer membrane of the cell. This is Acyl-[acyl-carrier-protein]--UDP-N-acetylglucosamine O-acyltransferase from Campylobacter jejuni subsp. jejuni serotype O:23/36 (strain 81-176).